Consider the following 320-residue polypeptide: Nucleotide-binding protein Acid_7395 (320 aa).

Residues 1 to 34 (MPLRKKGAATTKAAATRKDSAKAPASSKRKDAPQ) are disordered. An ATP-binding site is contributed by 44–51 (GLSGSGKG). 94 to 97 (DIRE) contacts GTP.

The protein belongs to the RapZ-like family.

Its function is as follows. Displays ATPase and GTPase activities. The polypeptide is Nucleotide-binding protein Acid_7395 (Solibacter usitatus (strain Ellin6076)).